The chain runs to 591 residues: Serine/threonine-protein kinase Nek2 (591 aa).

Positions 4-258 constitute a Protein kinase domain; that stretch reads YEVLEQIGKG…AAQLLKHPQL (255 aa). Residues 10 to 18 and K33 contribute to the ATP site; that span reads IGKGAFGSA. D129 (proton acceptor) is an active-site residue. Disordered regions lie at residues 309–331, 382–408, and 500–534; these read LGNE…SSTR, ARNQ…TTPN, and RTDG…DTSS. 2 stretches are compositionally biased toward polar residues: residues 391–408 and 504–534; these read TSYN…TTPN and DNGS…DTSS.

This sequence belongs to the protein kinase superfamily. NEK Ser/Thr protein kinase family. NIMA subfamily. Expressed in anthers, pistils and leaves.

The enzyme catalyses L-seryl-[protein] + ATP = O-phospho-L-seryl-[protein] + ADP + H(+). It carries out the reaction L-threonyl-[protein] + ATP = O-phospho-L-threonyl-[protein] + ADP + H(+). May be involved in plant development processes. The sequence is that of Serine/threonine-protein kinase Nek2 from Oryza sativa subsp. japonica (Rice).